A 94-amino-acid polypeptide reads, in one-letter code: Large ribosomal subunit protein bL27 (94 aa).

A propeptide spanning residues 1-9 is cleaved from the precursor; that stretch reads MLKLNLQFF.

Belongs to the bacterial ribosomal protein bL27 family. Post-translationally, the N-terminus is cleaved by ribosomal processing cysteine protease Prp.

The polypeptide is Large ribosomal subunit protein bL27 (Staphylococcus epidermidis (strain ATCC 35984 / DSM 28319 / BCRC 17069 / CCUG 31568 / BM 3577 / RP62A)).